Reading from the N-terminus, the 146-residue chain is D-aminoacyl-tRNA deacylase (146 aa).

The Gly-cisPro motif, important for rejection of L-amino acids motif lies at 137 to 138 (GP).

The protein belongs to the DTD family. As to quaternary structure, homodimer.

The protein resides in the cytoplasm. It carries out the reaction glycyl-tRNA(Ala) + H2O = tRNA(Ala) + glycine + H(+). The catalysed reaction is a D-aminoacyl-tRNA + H2O = a tRNA + a D-alpha-amino acid + H(+). An aminoacyl-tRNA editing enzyme that deacylates mischarged D-aminoacyl-tRNAs. Also deacylates mischarged glycyl-tRNA(Ala), protecting cells against glycine mischarging by AlaRS. Acts via tRNA-based rather than protein-based catalysis; rejects L-amino acids rather than detecting D-amino acids in the active site. By recycling D-aminoacyl-tRNA to D-amino acids and free tRNA molecules, this enzyme counteracts the toxicity associated with the formation of D-aminoacyl-tRNA entities in vivo and helps enforce protein L-homochirality. The polypeptide is D-aminoacyl-tRNA deacylase (Desulfatibacillum aliphaticivorans).